Here is a 1349-residue protein sequence, read N- to C-terminus: DNA-directed RNA polymerase subunit beta' (1349 aa).

Zn(2+) contacts are provided by Cys219, Cys293, Cys300, and Cys303. Residues 1298-1349 (LDSPTLGESGFGSRRAERSVLDDEDELIADEVVDDDDFEEEEEDDEDDFDDE) form a disordered region. Acidic residues predominate over residues 1319-1349 (DDEDELIADEVVDDDDFEEEEEDDEDDFDDE).

It belongs to the RNA polymerase beta' chain family. RpoC2 subfamily. As to quaternary structure, in cyanobacteria the RNAP catalytic core is composed of 2 alpha, 1 beta, 1 beta', 1 gamma and 1 omega subunit. When a sigma factor is associated with the core the holoenzyme is formed, which can initiate transcription. Zn(2+) is required as a cofactor.

It carries out the reaction RNA(n) + a ribonucleoside 5'-triphosphate = RNA(n+1) + diphosphate. In terms of biological role, DNA-dependent RNA polymerase catalyzes the transcription of DNA into RNA using the four ribonucleoside triphosphates as substrates. This chain is DNA-directed RNA polymerase subunit beta', found in Nostoc punctiforme (strain ATCC 29133 / PCC 73102).